Here is a 271-residue protein sequence, read N- to C-terminus: MPELPEVEVTRQGIAPFLVEQTVVDLVIRNGSLRWPVPDIAKQIIGQVIRQVRRRAKYLLIDTDAGTSIVHLGMSGSLRILPHDTPVEKHDHIDLVLANGRILRFNDPRRFGAWLWCELPEEAHPLLAKLGPEPLTNAFNVTQLAAALAGKKKAIKLCLMDNHIVVGVGNIYANEALFAAGIHPEAEAGKIDIERLTVLVAEVKQILAHAIKQGGTTLKDFTNADGKPGYFAQKLHVYSRGGETCTSCGNLLSEIRLGQRTTVFCGICQTR.

Proline 2 functions as the Schiff-base intermediate with DNA in the catalytic mechanism. Glutamate 3 serves as the catalytic Proton donor. Lysine 57 functions as the Proton donor; for beta-elimination activity in the catalytic mechanism. DNA is bound by residues histidine 90, arginine 109, and lysine 151. The FPG-type zinc finger occupies 236–270 (HVYSRGGETCTSCGNLLSEIRLGQRTTVFCGICQT). The active-site Proton donor; for delta-elimination activity is the arginine 260.

Belongs to the FPG family. Monomer. It depends on Zn(2+) as a cofactor.

The catalysed reaction is Hydrolysis of DNA containing ring-opened 7-methylguanine residues, releasing 2,6-diamino-4-hydroxy-5-(N-methyl)formamidopyrimidine.. It carries out the reaction 2'-deoxyribonucleotide-(2'-deoxyribose 5'-phosphate)-2'-deoxyribonucleotide-DNA = a 3'-end 2'-deoxyribonucleotide-(2,3-dehydro-2,3-deoxyribose 5'-phosphate)-DNA + a 5'-end 5'-phospho-2'-deoxyribonucleoside-DNA + H(+). Functionally, involved in base excision repair of DNA damaged by oxidation or by mutagenic agents. Acts as a DNA glycosylase that recognizes and removes damaged bases. Has a preference for oxidized purines, such as 7,8-dihydro-8-oxoguanine (8-oxoG). Has AP (apurinic/apyrimidinic) lyase activity and introduces nicks in the DNA strand. Cleaves the DNA backbone by beta-delta elimination to generate a single-strand break at the site of the removed base with both 3'- and 5'-phosphates. The chain is Formamidopyrimidine-DNA glycosylase from Shewanella baltica (strain OS195).